A 537-amino-acid polypeptide reads, in one-letter code: Tyrosine-protein kinase Fyn (537 aa).

G2 carries the N-myristoyl glycine lipid modification. 2 S-palmitoyl cysteine lipidation sites follow: C3 and C6. T12 carries the phosphothreonine; by PKC modification. An SH3 domain is found at 82 to 143; the sequence is TGVTLFVALY…PSNYVAPVDS (62 aa). Residues 149 to 246 form the SH2 domain; sequence WYFGKLGRKD…GLCCRLVVPC (98 aa). The Protein kinase domain maps to 271 to 524; it reads LQLIKRLGNG…YLQAFLEDYF (254 aa). ATP-binding positions include 277–285 and K299; that span reads LGNGQFGEV. Catalysis depends on D390, which acts as the Proton acceptor. Y420 carries the phosphotyrosine; by autocatalysis modification. Y531 carries the phosphotyrosine modification.

The protein belongs to the protein kinase superfamily. Tyr protein kinase family. SRC subfamily. Associates through its SH3 domain, to the p85 subunit of phosphatidylinositol 3-kinase. The cofactor is Mn(2+).

The enzyme catalyses L-tyrosyl-[protein] + ATP = O-phospho-L-tyrosyl-[protein] + ADP + H(+). With respect to regulation, inhibited by phosphorylation of Tyr-531 by leukocyte common antigen and activated by dephosphorylation of this site. Functionally, tyrosine-protein kinase implicated in the control of cell growth. Plays a role in the regulation of intracellular calcium levels. Required in brain development and mature brain function with important roles in the regulation of axon growth, axon guidance, and neurite extension. In Xiphophorus hellerii (Green swordtail), this protein is Tyrosine-protein kinase Fyn (fyn).